Consider the following 1104-residue polypeptide: Reverse gyrase (1104 aa).

The RG N-terminal-type zinc finger occupies Met-1–Ser-39. Residues Cys-11, Cys-14, Cys-29, and Cys-32 each contribute to the Zn(2+) site. The ADP site is built by Phe-75, Asp-78, Gln-83, Gly-103, Gly-105, Lys-106, Thr-107, and Thr-108. ATP is bound by residues Gln-83 and Ala-100–Thr-107. In terms of domain architecture, Helicase ATP-binding spans Ala-87–Tyr-242. The DEAD box signature appears at Asp-203 to Asp-206. Positions Gly-223–Pro-250 are insert region. The 223-residue stretch at Lys-300–Val-522 folds into the Helicase C-terminal domain. The segment at Arg-390–Pro-460 is latch region. Positions Asp-538 to Gly-1104 are topoisomerase I. In terms of domain architecture, Toprim spans Ser-542 to Ile-699. Glu-548 serves as a coordination point for Mg(2+). The segment at Leu-618 to Asp-645 adopts an RG C-terminal-type zinc-finger fold. Zn(2+)-binding residues include Cys-621, Cys-624, Cys-635, and Cys-638. Residue Asp-668 participates in Mg(2+) binding. Residues Asp-715 to Met-1101 enclose the Topo IA-type catalytic domain. Catalysis depends on Tyr-851, which acts as the O-(5'-phospho-DNA)-tyrosine intermediate.

This sequence in the N-terminal section; belongs to the DEAD box helicase family. DDVD subfamily. It in the C-terminal section; belongs to the type IA topoisomerase family. Monomer. Requires Zn(2+) as cofactor. Mg(2+) is required as a cofactor.

It localises to the cytoplasm. It catalyses the reaction ATP + H2O = ADP + phosphate + H(+). In terms of biological role, modifies the topological state of DNA by introducing positive supercoils in an ATP-dependent process. Increases the linking number in steps of +1. Probably recognizes regions with a low GC content which melt and form a ssDNA bubble, allowing the enzyme to bind and cleave the DNA prior to strand passage; the bubble is probably cleaved by 2 reverse gyrase molecules, one on each strand. Positively supercoils DNA with all NTPS, although it strongly prefers ATP. In the presence of non-hydrolyzable ATP analogs it partially relaxes negative supercoils. Has an intrinsic ATPase activity that is stimulated by DNA; ssDNA is most effective. Binds to single-stranded DNA, transiently cleaves and then rejoins the ends, introducing a positive supercoil in the process. The scissile phosphodiester is attacked by the catalytic tyrosine of the enzyme, resulting in the formation of a DNA-(5'-phosphotyrosyl)-enzyme intermediate. The helicase-like domain is a nucleotide-dependent switch that alternates between a physically closed ATP-bound state with a slight preference for dsDNA, and an open ADP-bound state with a high preference for ssDNA. Whole enzyme has a very poor (k-unwind=0.001 sec(-1)) non-processive helicase activity in the 3'-5' direction that works on short substrates, while the isolated helicase domain has a slightly better helicase activity that works in both directions. Probably involved in rewinding DNA strands in regions of the chromosome that have opened up to allow replication, transcription, DNA repair and/or for DNA protection. This is Reverse gyrase from Thermotoga maritima (strain ATCC 43589 / DSM 3109 / JCM 10099 / NBRC 100826 / MSB8).